The following is a 454-amino-acid chain: Protein odr-4 homolog (454 aa).

A run of 2 helical transmembrane segments spans residues 82–102 and 432–452; these read MLPG…ELAN and IGVI…FHYF.

Belongs to the ODR-4 family. In terms of tissue distribution, ubiquitously expressed.

The protein resides in the membrane. Its function is as follows. May play a role in the trafficking of a subset of G-protein coupled receptors. The protein is Protein odr-4 homolog of Homo sapiens (Human).